Reading from the N-terminus, the 43-residue chain is Photosystem I reaction center subunit IX (43 aa).

Residues 7-27 (YLSTAPVLATFWFGLLAGLLI) form a helical membrane-spanning segment.

It belongs to the PsaJ family.

The protein localises to the plastid. Its subcellular location is the chloroplast thylakoid membrane. Its function is as follows. May help in the organization of the PsaE and PsaF subunits. This is Photosystem I reaction center subunit IX from Gnetum parvifolium (Small-leaved jointfir).